The chain runs to 112 residues: Putative pterin-4-alpha-carbinolamine dehydratase (112 aa).

The protein belongs to the pterin-4-alpha-carbinolamine dehydratase family.

The enzyme catalyses (4aS,6R)-4a-hydroxy-L-erythro-5,6,7,8-tetrahydrobiopterin = (6R)-L-erythro-6,7-dihydrobiopterin + H2O. This chain is Putative pterin-4-alpha-carbinolamine dehydratase, found in Hahella chejuensis (strain KCTC 2396).